Here is a 110-residue protein sequence, read N- to C-terminus: Large ribosomal subunit protein uL22 (110 aa).

It belongs to the universal ribosomal protein uL22 family. In terms of assembly, part of the 50S ribosomal subunit.

Functionally, this protein binds specifically to 23S rRNA; its binding is stimulated by other ribosomal proteins, e.g. L4, L17, and L20. It is important during the early stages of 50S assembly. It makes multiple contacts with different domains of the 23S rRNA in the assembled 50S subunit and ribosome. Its function is as follows. The globular domain of the protein is located near the polypeptide exit tunnel on the outside of the subunit, while an extended beta-hairpin is found that lines the wall of the exit tunnel in the center of the 70S ribosome. The sequence is that of Large ribosomal subunit protein uL22 from Aliivibrio fischeri (strain MJ11) (Vibrio fischeri).